The following is a 257-amino-acid chain: Triosephosphate isomerase, cytosolic (257 aa).

2 residues coordinate substrate: Asn10 and Lys12. The Electrophile role is filled by His96. The Proton acceptor role is filled by Glu167.

Belongs to the triosephosphate isomerase family. In terms of assembly, homodimer. In terms of tissue distribution, higher levels found in leaves than in roots.

It is found in the cytoplasm. The enzyme catalyses D-glyceraldehyde 3-phosphate = dihydroxyacetone phosphate. Its pathway is carbohydrate biosynthesis; gluconeogenesis. It functions in the pathway carbohydrate degradation; glycolysis; D-glyceraldehyde 3-phosphate from glycerone phosphate: step 1/1. The protein is Triosephosphate isomerase, cytosolic (TPI) of Stellaria longipes (Longstalk starwort).